The chain runs to 630 residues: Protein phosphatase 2C-like domain-containing protein 1 (630 aa).

A PPM-type phosphatase domain is found at 170–621; it reads GVGICEDRNS…DNITVMVIFL (452 aa). Residues 557 to 569 are compositionally biased toward basic and acidic residues; it reads TTHRKPCSEKVTD. The tract at residues 557 to 578 is disordered; sequence TTHRKPCSEKVTDRPTSVNDVA.

Belongs to the PP2C family.

This Homo sapiens (Human) protein is Protein phosphatase 2C-like domain-containing protein 1 (PP2D1).